Consider the following 653-residue polypeptide: Epithelial sodium channel subunit gamma (653 aa).

Topologically, residues 1–55 (MAPGEKIKAKIKKNLPVKGPQAPTIKELMRWYCLNTNTHGCRRIVVSPGRLRRLL) are cytoplasmic. The helical transmembrane segment at 56 to 76 (WIAFTLTAVGLIFWQCALLVF) threads the bilayer. Residues 77–538 (SFYTVSVSIK…EMLLSNFGGQ (462 aa)) lie on the Extracellular side of the membrane. 8 cysteine pairs are disulfide-bonded: Cys-100-Cys-287, Cys-211-Cys-218, Cys-264-Cys-271, Cys-376-Cys-461, Cys-398-Cys-457, Cys-402-Cys-453, Cys-411-Cys-438, and Cys-413-Cys-427. The interval 137–225 (RKQRDTESWS…SDCATYTFSS (89 aa)) is gating release of inhibition by proteolysis (GRIP); protease-sensitive region that is responsible for the proteolytic activation of the channel. The N-linked (GlcNAc...) asparagine glycan is linked to Asn-213. N-linked (GlcNAc...) asparagine glycosylation is present at Asn-275. Residue Asn-501 is glycosylated (N-linked (GlcNAc...) asparagine). A helical transmembrane segment spans residues 539–559 (LGLWMSCSVVCVIEIIEVFFI). Residues 560 to 653 (DSLSIVTRRQ…LADTRLPDEP (94 aa)) lie on the Cytoplasmic side of the membrane. Residues 582-632 (AAPSAEAPSGAQGQENPALEIDDDLPTFTSALSLPPAPGAQVPGTPPPRYN) are disordered. The short motif at 627 to 631 (PPPRY) is the PY motif; recruits WW domain-containing proteins and is thereby required for ubiquitination and inhibition of the channel by NEDD4 and NEDD4L element.

The protein belongs to the amiloride-sensitive sodium channel (TC 1.A.6) family. SCNN1G subfamily. As to quaternary structure, component of the heterotrimeric epithelial sodium channel (ENaC) composed of an alpha/SCNN1A, a beta/SCNN1B and a gamma/SCNN1G subunit. Interacts with WWP1 (via WW domains). Interacts with WWP2 (via WW domains); inhibits the channel. Interacts with the full-length immature form of PCSK9 (pro-PCSK9); inhibits ENaC by promoting its proteasomal degradation. Interacts with BPIFA1; the interaction is indirect via SCNN1B and inhibits the proteolytic maturation of SCNN1A and SCNN1G and the activation of ENaC. Phosphorylated on serine and threonine residues. Aldosterone and insulin increase the basal level of phosphorylation. In terms of processing, ubiquitinated. Can be ubiquitinated at multiple sites and undergo monoubiquitination and polyubiquitination. Ubiquitination by NEDD4 or NEDD4L inhibits the ENaC channel through endocytosis, intracellular retention and degradation of its individual subunits. Post-translationally, ENaC is activated through the proteolytic maturation of its subunits. Furin cleaves the SCNN1G subunit first, followed by cleavage by prostasin (PRSS8), which results in a stepwise increase in the open probability of the channel due to the release of an inhibitory tract. BPIFA1, which is recruited by the SCNN1B subunit, prevents the proteolytic activation of ENaC. N-glycosylated. N-linked glycans are processed to complex type during ENaC complex assembly and transport to the plasma membrane.

It is found in the apical cell membrane. It carries out the reaction Na(+)(in) = Na(+)(out). Originally identified and characterized by its inhibition by the diuretic drug amiloride. Functionally, this is one of the three pore-forming subunits of the heterotrimeric epithelial sodium channel (ENaC), a critical regulator of sodium balance and fluid homeostasis. ENaC operates in epithelial tissues, where it mediates the electrodiffusion of sodium ions from extracellular fluid through the apical membrane of cells, with water following osmotically. It plays a key role in maintaining sodium homeostasis through electrogenic sodium reabsorption in the kidneys. Additionally, ENaC is essential for airway surface liquid homeostasis, which is crucial for proper mucus clearance. The chain is Epithelial sodium channel subunit gamma from Oryctolagus cuniculus (Rabbit).